We begin with the raw amino-acid sequence, 333 residues long: Viral cathepsin (333 aa).

Positions 1-20 are cleaved as a signal peptide; the sequence is MTKLLNFVILASVLTVTAHA. The propeptide at 21-124 is activation peptide; that stretch reads LTYDLNNSDE…VIKDEPQALL (104 aa). Intrachain disulfides connect Cys-145/Cys-186, Cys-179/Cys-219, and Cys-272/Cys-321. Residue Cys-148 is part of the active site. A glycan (N-linked (GlcNAc...) asparagine; by host) is linked at Asn-170. Residues His-280 and Asn-300 contribute to the active site.

Belongs to the peptidase C1 family. In terms of processing, synthesized as an inactive proenzyme and activated by proteolytic removal of the inhibitory propeptide.

The catalysed reaction is Endopeptidase of broad specificity, hydrolyzing substrates of both cathepsin L and cathepsin B.. Cysteine protease that plays an essential role in host liquefaction to facilitate horizontal transmission of the virus. May participate in the degradation of foreign protein expressed by the baculovirus system. This is Viral cathepsin (VCATH) from Cydia pomonella granulosis virus (isolate Mexico/1963) (CpGV).